The sequence spans 577 residues: Sulfite reductase [NADPH] hemoprotein beta-component (577 aa).

Cys440, Cys446, Cys486, and Cys490 together coordinate [4Fe-4S] cluster. Cys490 is a siroheme binding site.

Belongs to the nitrite and sulfite reductase 4Fe-4S domain family. As to quaternary structure, alpha(8)-beta(8). The alpha component is a flavoprotein, the beta component is a hemoprotein. The cofactor is siroheme. It depends on [4Fe-4S] cluster as a cofactor.

The enzyme catalyses hydrogen sulfide + 3 NADP(+) + 3 H2O = sulfite + 3 NADPH + 4 H(+). The protein operates within sulfur metabolism; hydrogen sulfide biosynthesis; hydrogen sulfide from sulfite (NADPH route): step 1/1. In terms of biological role, component of the sulfite reductase complex that catalyzes the 6-electron reduction of sulfite to sulfide. This is one of several activities required for the biosynthesis of L-cysteine from sulfate. In Vibrio cholerae serotype O1 (strain ATCC 39315 / El Tor Inaba N16961), this protein is Sulfite reductase [NADPH] hemoprotein beta-component.